Here is a 642-residue protein sequence, read N- to C-terminus: Frizzled and smoothened-like protein B (642 aa).

Positions 1 to 26 are cleaved as a signal peptide; that stretch reads MFNKNNNNNKIIIILKLFLIILIVNN. Residues 27–264 are Extracellular-facing; that stretch reads NNNIKTFGLN…KWHQMYNMSK (238 aa). The FZ domain maps to 47-197; it reads DPTATCSNYI…GFFPVPCSDP (151 aa). Disulfide bonds link Cys-52/Cys-123, Cys-65/Cys-116, and Cys-143/Cys-194. N-linked (GlcNAc...) asparagine glycosylation is found at Asn-80, Asn-153, Asn-162, Asn-177, Asn-203, Asn-222, and Asn-261. Residues 265-285 form a helical membrane-spanning segment; the sequence is ILSTISFVCSIYNVLTFGILN. Topologically, residues 286 to 294 are cytoplasmic; the sequence is HRRSKYNYC. The chain crosses the membrane as a helical span at residues 295–315; sequence ITFFSASVIIITMMDIVTYGI. Over 316-344 the chain is Extracellular; that stretch reads GYEKLLCPEPGRFAVQSDVSCGATGALFH. A helical transmembrane segment spans residues 345–365; sequence IGITNGVFWWTTMSICLFAVV. At 366-375 the chain is on the cytoplasmic side; sequence KRIKLFDFRY. The chain crosses the membrane as a helical span at residues 376-398; it reads FIIFNTTASLISVIIPLAGNAFM. Topologically, residues 399–416 are extracellular; it reads AGTGSLACWIRKTWYVNS. Residues 417 to 437 traverse the membrane as a helical segment; that stretch reads VFWIPCGIALTIGSVCIILVI. At 438–460 the chain is on the cytoplasmic side; sequence YEIYKITKNVSTKDNRMILLQIK. Residues 461-481 traverse the membrane as a helical segment; the sequence is PFLCVTLVGGSFYYLFIFNFD. Asn-482 is a glycosylation site (N-linked (GlcNAc...) asparagine). At 482–514 the chain is on the extracellular side; the sequence is NESHSKEYKEKVVDYVMCLLSDTGKECLMAGPN. Residues 515 to 535 form a helical membrane-spanning segment; that stretch reads YVAYFVFYFFIRLFGITFFCI. The Cytoplasmic segment spans residues 536–642; the sequence is YGTSQNARDI…INSASNTSSD (107 aa). Residues 578-642 are disordered; sequence GTNPTSNSKN…INSASNTSSD (65 aa). Positions 583-598 are enriched in low complexity; sequence SNSKNSKNNQNNQNNN. Positions 584-611 form a coiled coil; sequence NSKNSKNNQNNQNNNSRKEFESKNIELE. Residues 599 to 609 show a composition bias toward basic and acidic residues; that stretch reads SRKEFESKNIE. 2 stretches are compositionally biased toward polar residues: residues 614–623 and 632–642; these read ESISKGQTTR and NINSASNTSSD.

The protein belongs to the G-protein coupled receptor Fz/Smo family.

Its subcellular location is the membrane. The chain is Frizzled and smoothened-like protein B (fslB) from Dictyostelium discoideum (Social amoeba).